We begin with the raw amino-acid sequence, 208 residues long: Protein-L-isoaspartate O-methyltransferase (208 aa).

Serine 59 is an active-site residue.

Belongs to the methyltransferase superfamily. L-isoaspartyl/D-aspartyl protein methyltransferase family.

The protein resides in the cytoplasm. It catalyses the reaction [protein]-L-isoaspartate + S-adenosyl-L-methionine = [protein]-L-isoaspartate alpha-methyl ester + S-adenosyl-L-homocysteine. Catalyzes the methyl esterification of L-isoaspartyl residues in peptides and proteins that result from spontaneous decomposition of normal L-aspartyl and L-asparaginyl residues. It plays a role in the repair and/or degradation of damaged proteins. The chain is Protein-L-isoaspartate O-methyltransferase from Vibrio parahaemolyticus serotype O3:K6 (strain RIMD 2210633).